Reading from the N-terminus, the 170-residue chain is Small ribosomal subunit protein uS5 (170 aa).

The region spanning 11–74 (ILEKLVHINR…ETARRVLIHV (64 aa)) is the S5 DRBM domain.

It belongs to the universal ribosomal protein uS5 family. Part of the 30S ribosomal subunit. Contacts proteins S4 and S8.

With S4 and S12 plays an important role in translational accuracy. Its function is as follows. Located at the back of the 30S subunit body where it stabilizes the conformation of the head with respect to the body. In Pelagibacter ubique (strain HTCC1062), this protein is Small ribosomal subunit protein uS5.